Consider the following 2067-residue polypeptide: Lipoxygenase homology domain-containing protein 1 (2067 aa).

PLAT domains are found at residues 43-160 (RVYE…RDLL), 172-287 (NKYE…RDIL), 296-412 (ITYI…RQLY), 425-540 (FPWS…REMT), 553-673 (ARYH…RELL), 684-803 (FRYH…VELY), 814-934 (VHYE…RELL), 969-1087 (TTFS…RDLF), 1100-1225 (VPYE…RELV), 1254-1372 (VLYS…RLFY), 1421-1539 (IPYY…RVFD), 1552-1667 (VLYE…CEMC), 1679-1797 (TSYT…RDFA), 1810-1931 (TTYE…VFEV), and 1948-2064 (VKYE…RDLF).

Its subcellular location is the cell projection. The protein localises to the stereocilium. In terms of biological role, involved in hearing. Required for normal function of hair cells in the inner ear. The sequence is that of Lipoxygenase homology domain-containing protein 1 (LOXHD1) from Homo sapiens (Human).